The following is a 182-amino-acid chain: CDP-diacylglycerol--glycerol-3-phosphate 3-phosphatidyltransferase (182 aa).

At 2 to 12 (QFNIPTLLTLF) the chain is on the cytoplasmic side. The chain crosses the membrane as a helical span at residues 13–37 (RVILIPFFVLVFYLPVTWSPFAAAL). Over 38 to 60 (IFCVAAVTDWFDGFLARRWNQST) the chain is Periplasmic. The helical transmembrane segment at 61–81 (RFGAFLDPVADKVLVAIAMVL) threads the bilayer. The Cytoplasmic portion of the chain corresponds to 82-86 (VTEHY). The helical transmembrane segment at 87–107 (HSWWVTLPAATMIAREIIISA) threads the bilayer. Over 108–145 (LREWMAELGKRSSVAVSWIGKVKTTAQMVALAWLLWRP) the chain is Periplasmic. Residues 146–168 (NIWVEYAGIALFFVAAVLTLWSM) traverse the membrane as a helical segment. Residues 169–181 (LQYLSAARADLLD) lie on the Cytoplasmic side of the membrane.

It belongs to the CDP-alcohol phosphatidyltransferase class-I family.

It is found in the cell inner membrane. The enzyme catalyses a CDP-1,2-diacyl-sn-glycerol + sn-glycerol 3-phosphate = a 1,2-diacyl-sn-glycero-3-phospho-(1'-sn-glycero-3'-phosphate) + CMP + H(+). It participates in phospholipid metabolism; phosphatidylglycerol biosynthesis; phosphatidylglycerol from CDP-diacylglycerol: step 1/2. In terms of biological role, catalyzes the conversion of cytidine diphosphate diacylglycerol (CDP-DG) and glycerol 3-phosphate into phosphatidylglycerol. Essential for the synthesis of anionic phospholipids, thereby playing a role in balancing the ratio of zwitterionic and anionic phospholipids, which is thought to be important for normal membrane function. In Shigella sonnei (strain Ss046), this protein is CDP-diacylglycerol--glycerol-3-phosphate 3-phosphatidyltransferase.